The following is a 107-amino-acid chain: Ferredoxin 1 (107 aa).

4Fe-4S ferredoxin-type domains lie at 2-30 (TFVV…YEGP) and 31-60 (NFLV…SEDE). [3Fe-4S] cluster is bound by residues Cys-9 and Cys-17. The [4Fe-4S] cluster site is built by Cys-21, Cys-40, Cys-43, and Cys-46. Residue Cys-50 coordinates [3Fe-4S] cluster.

[4Fe-4S] cluster serves as cofactor. Requires [3Fe-4S] cluster as cofactor.

Its function is as follows. Ferredoxins are iron-sulfur proteins that transfer electrons in a wide variety of metabolic reactions. This is Ferredoxin 1 (fdxA) from Pseudomonas aeruginosa (strain ATCC 15692 / DSM 22644 / CIP 104116 / JCM 14847 / LMG 12228 / 1C / PRS 101 / PAO1).